Here is a 529-residue protein sequence, read N- to C-terminus: Heat shock factor protein 1 (529 aa).

M1 is modified (N-acetylmethionine). The segment at 15 to 120 (VPAFLTKLWT…LLENIKRKVT (106 aa)) is DNA-binding domain. An N6-acetyllysine modification is found at K80. N6-acetyllysine; alternate is present on K91. A Glycyl lysine isopeptide (Lys-Gly) (interchain with G-Cter in SUMO2); alternate cross-link involves residue K91. K118 carries the N6-acetyllysine modification. S121 bears the Phosphoserine; by MAPKAPK2 mark. Residues K126 and K131 each participate in a glycyl lysine isopeptide (Lys-Gly) (interchain with G-Cter in SUMO2) cross-link. The tract at residues 130–203 (IKIRQDSVTK…ISLVQSNRIL (74 aa)) is hydrophobic repeat HR-A/B. T142 carries the phosphothreonine; by CK2 modification. Residues K150 and K188 each carry the N6-acetyllysine modification. The tract at residues 203–224 (LGVKRKIPLMLNDSGSAHSMPK) is d domain. Residue K208 is modified to N6-acetyllysine; alternate. K208 is covalently cross-linked (Glycyl lysine isopeptide (Lys-Gly) (interchain with G-Cter in SUMO2); alternate). Phosphoserine; by PLK1 is present on S216. The tract at residues 221–310 (SMPKYSRQFS…PPSPPQSPRV (90 aa)) is regulatory domain. K224 participates in a covalent cross-link: Glycyl lysine isopeptide (Lys-Gly) (interchain with G-Cter in SUMO2). S230 bears the Phosphoserine; by CAMK2A mark. Residues S275 and S292 each carry the phosphoserine modification. The disordered stretch occupies residues 295–324 (VRVKEEPPSPPQSPRVEEASPGRPSSVDTL). K298 is subject to N6-acetyllysine; alternate. K298 participates in a covalent cross-link: Glycyl lysine isopeptide (Lys-Gly) (interchain with G-Cter in SUMO2); alternate. A Glycyl lysine isopeptide (Lys-Gly) (interchain with G-Cter in SUMO); alternate cross-link involves residue K298. At S303 the chain carries Phosphoserine; by GSK3-beta. Position 307 is a phosphoserine; by MAPK3 (S307). 2 positions are modified to phosphoserine: S314 and S319. S320 bears the Phosphoserine; by PKA mark. Position 323 is a phosphothreonine (T323). At S326 the chain carries Phosphoserine; by MAPK12. The tract at residues 336 to 372 (RESEPAPASVTALTDARGHTDTEGRPPSPPPTSTPEK) is disordered. Residue S344 is modified to Phosphoserine. S363 is subject to Phosphoserine; by MAPK8. The tract at residues 371-529 (EKCLSVACLD…PPKAKDPTVS (159 aa)) is transactivation domain. Residues 384-409 (LSDHLDAMDSNLDNLQTMLSSHGFSV) are hydrophobic repeat HR-C. The 9aaTAD motif lies at 412–420 (SALLDLFSP). A Phosphoserine; by PLK1 modification is found at S419. Position 444 is a phosphoserine (S444). Disordered stretches follow at residues 444 to 463 (SPQE…DSGK) and 502 to 529 (EGDG…PTVS). At K524 the chain carries N6-acetyllysine.

Belongs to the HSF family. In terms of assembly, monomer; cytoplasmic latent and transcriptionally inactive monomeric form in unstressed cells. Homotrimer; in response to stress, such as heat shock, homotrimerizes and translocates into the nucleus, binds to heat shock element (HSE) sequences in promoter of heat shock protein (HSP) genes and acquires transcriptional ability. Interacts (via monomeric form) with FKBP4; this interaction occurs in unstressed cells. Associates (via monomeric form) with HSP90 proteins in a multichaperone complex in unnstressed cell; this association maintains HSF1 in a non-DNA-binding and transcriptional inactive form by preventing HSF1 homotrimerization. Homotrimeric transactivation activity is modulated by protein-protein interactions and post-translational modifications. Interacts with HSP90AA1; this interaction is decreased in a IER5-dependent manner, promoting HSF1 accumulation in the nucleus, homotrimerization and DNA-binding activities. Part (via regulatory domain in the homotrimeric form) of a large heat shock-induced HSP90-dependent multichaperone complex at least composed of FKBP4, FKBP5, HSP90 proteins, PPID, PPP5C and PTGES3; this association maintains the HSF1 homotrimeric DNA-bound form in a transcriptionally inactive form. Interacts with BAG3 (via BAG domain); this interaction occurs in normal and heat-shocked cells promoting nuclear shuttling of HSF1 in a BAG3-dependent manner. Interacts (via homotrimeric and hyperphosphorylated form) with FKBP4; this interaction occurs upon heat shock in a HSP90-dependent multichaperone complex. Interacts (via homotrimeric form preferentially) with EEF1A proteins. In heat shocked cells, stress-denatured proteins compete with HSF1 homotrimeric DNA-bound form for association of the HSP90-dependent multichaperone complex, and hence alleviating repression of HSF1-mediated transcriptional activity. Interacts (via homotrimeric form preferentially) with DAXX; this interaction relieves homotrimeric HSF1 from repression of its transcriptional activity by HSP90-dependent multichaperone complex upon heat shock. Interacts (via D domain and preferentially with hyperphosphorylated form) with JNK1; this interaction occurs under both normal growth conditions and immediately upon heat shock. Interacts (via D domain and preferentially with hyperphosphorylated form) with MAPK3; this interaction occurs upon heat shock. Interacts with IER5 (via central region); this interaction promotes PPP2CA-induced dephosphorylation on Ser-121, Ser-307, Ser-314, Thr-323 and Thr-367 and HSF1 transactivation activity. Found in a ribonucleoprotein complex composed of the HSF1 homotrimeric form, translation elongation factor eEF1A proteins and non-coding RNA heat shock RNA-1 (HSR1); this complex occurs upon heat shock and stimulates HSF1 DNA-binding activity. Interacts (via transactivation domain) with HSPA1A/HSP70 and DNAJB1; these interactions result in the inhibition of heat shock- and HSF1-induced transcriptional activity during the attenuation and recovery phase from heat shock. Interacts (via Ser-303 and Ser-307 phosphorylated form) with YWHAE; this interaction promotes HSF1 sequestration in the cytoplasm in an ERK-dependent manner. Found in a complex with IER5 and PPP2CA. Interacts with TPR; this interaction increases upon heat shock and stimulates export of HSP70 mRNA. Interacts with SYMPK (via N-terminus) and CSTF2; these interactions occur upon heat shock. Interacts (via transactivation domain) with HSPA8. Interacts with EEF1D; this interaction occurs at heat shock promoter element (HSE) sequences. Interacts with MAPKAPK2. Interacts with PRKACA/PKA. Interacts (via transactivation domain) with GTF2A2. Interacts (via transactivation domain) with GTF2B. Interacts (via transactivation domain) with TBP. Interacts with CDK9, CCNT1 and EP300. Interacts (via N-terminus) with XRCC5 (via N-terminus) and XRCC6 (via N-terminus); these interactions are direct and prevent XRCC5/XRCC6 heterodimeric binding and non-homologous end joining (NHEJ) repair activities induced by ionizing radiation (IR). Interacts with PLK1; this interaction occurs during the early mitotic period, increases upon heat shock but does not modulate neither HSF1 homotrimerization and DNA-binding activities. Interacts (via Ser-216 phosphorylated form) with CDC20; this interaction occurs in mitosis in a MAD2L1-dependent manner and prevents PLK1-stimulated degradation of HSF1 by blocking the recruitment of the SCF(BTRC) ubiquitin ligase complex. Interacts with MAD2L1; this interaction occurs in mitosis. Interacts with BTRC; this interaction occurs during mitosis, induces its ubiquitin-dependent degradation following stimulus-dependent phosphorylation at Ser-216, a process inhibited by CDC20. Interacts with HSP90AA1 and HSP90AB1. Forms a complex with TTC5/STRAP and p300/EP300; these interactions augment chromatin-bound HSF1 and p300/EP300 histone acetyltransferase activity. Phosphorylated. Phosphorylated in unstressed cells; this phosphorylation is constitutive and implicated in the repression of HSF1 transcriptional activity. Phosphorylated on Ser-121 by MAPKAPK2; this phosphorylation promotes interaction with HSP90 proteins and inhibits HSF1 homotrimerization, DNA-binding and transactivation activities. Phosphorylation on Ser-303 by GSK3B/GSK3-beta and on Ser-307 by MAPK3 within the regulatory domain is involved in the repression of HSF1 transcriptional activity and occurs in a RAF1-dependent manner. Phosphorylation on Ser-303 and Ser-307 increases HSF1 nuclear export in a YWHAE- and XPO1/CRM1-dependent manner. Phosphorylation on Ser-307 is a prerequisite for phosphorylation on Ser-303. According to PubMed:9535852, Ser-303 is not phosphorylated in unstressed cells. Phosphorylated on Ser-419 by PLK1; phosphorylation promotes nuclear translocation upon heat shock. Hyperphosphorylated upon heat shock and during the attenuation and recovery phase period of the heat shock response. Phosphorylated on Thr-142; this phosphorylation increases HSF1 transactivation activity upon heat shock. Phosphorylation on Ser-230 by CAMK2A; this phosphorylation enhances HSF1 transactivation activity upon heat shock. Phosphorylation on Ser-326 by MAPK12; this phosphorylation enhances HSF1 nuclear translocation, homotrimerization and transactivation activities upon heat shock. Phosphorylated on Ser-320 by PRKACA/PKA; this phosphorylation promotes nuclear localization and transcriptional activity upon heat shock. Phosphorylated on Ser-363 by MAPK8; this phosphorylation occurs upon heat shock, induces HSF1 translocation into nuclear stress bodies and negatively regulates transactivation activity. Neither basal nor stress-inducible phosphorylation on Ser-230, Ser-292, Ser-303, Ser-307, Ser-314, Ser-319, Ser-320, Thr-323, Ser-326, Ser-338, Ser-344, Ser-363, Thr-367, Ser-368 and Thr-369 within the regulatory domain is involved in the regulation of HSF1 subcellular localization or DNA-binding activity; however, it negatively regulates HSF1 transactivation activity. Phosphorylated on Ser-216 by PLK1 in the early mitotic period; this phosphorylation regulates HSF1 localization to the spindle pole, the recruitment of the SCF(BTRC) ubiquitin ligase complex inducing HSF1 degradation, and hence mitotic progression. Dephosphorylated on Ser-121, Ser-307, Ser-314, Thr-323 and Thr-367 by phosphatase PPP2CA in an IER5-dependent manner, leading to HSF1-mediated transactivation activity. Post-translationally, sumoylated with SUMO1 and SUMO2 upon heat shock in a ERK2-dependent manner. Sumoylated by SUMO1 on Lys-298; sumoylation occurs upon heat shock and promotes its localization to nuclear stress bodies and DNA-binding activity. Phosphorylation on Ser-303 and Ser-307 is probably a prerequisite for sumoylation. In terms of processing, acetylated on Lys-118; this acetylation is decreased in a IER5-dependent manner. Acetylated on Lys-118, Lys-208 and Lys-298; these acetylations occur in a EP300-dependent manner. Acetylated on Lys-80; this acetylation inhibits DNA-binding activity upon heat shock. Deacetylated on Lys-80 by SIRT1; this deacetylation increases DNA-binding activity. Ubiquitinated by SCF(BTRC) and degraded following stimulus-dependent phosphorylation at Ser-216 by PLK1 in mitosis. Polyubiquitinated. Undergoes proteasomal degradation upon heat shock and during the attenuation and recovery phase period of the heat shock response.

It localises to the nucleus. It is found in the cytoplasm. The protein resides in the nucleoplasm. Its subcellular location is the perinuclear region. The protein localises to the cytoskeleton. It localises to the spindle pole. It is found in the microtubule organizing center. The protein resides in the centrosome. Its subcellular location is the chromosome. The protein localises to the centromere. It localises to the kinetochore. In terms of biological role, functions as a stress-inducible and DNA-binding transcription factor that plays a central role in the transcriptional activation of the heat shock response (HSR), leading to the expression of a large class of molecular chaperones, heat shock proteins (HSPs), that protect cells from cellular insult damage. In unstressed cells, is present in a HSP90-containing multichaperone complex that maintains it in a non-DNA-binding inactivated monomeric form. Upon exposure to heat and other stress stimuli, undergoes homotrimerization and activates HSP gene transcription through binding to site-specific heat shock elements (HSEs) present in the promoter regions of HSP genes. Upon heat shock stress, forms a chromatin-associated complex with TTC5/STRAP and p300/EP300 to stimulate HSR transcription, therefore increasing cell survival. Activation is reversible, and during the attenuation and recovery phase period of the HSR, returns to its unactivated form. Binds to inverted 5'-NGAAN-3' pentamer DNA sequences. Binds to chromatin at heat shock gene promoters. Activates transcription of transcription factor FOXR1 which in turn activates transcription of the heat shock chaperones HSPA1A and HSPA6 and the antioxidant NADPH-dependent reductase DHRS2. Also serves several other functions independently of its transcriptional activity. Involved in the repression of Ras-induced transcriptional activation of the c-fos gene in heat-stressed cells. Positively regulates pre-mRNA 3'-end processing and polyadenylation of HSP70 mRNA upon heat-stressed cells in a symplekin (SYMPK)-dependent manner. Plays a role in nuclear export of stress-induced HSP70 mRNA. Plays a role in the regulation of mitotic progression. Also plays a role as a negative regulator of non-homologous end joining (NHEJ) repair activity in a DNA damage-dependent manner. Involved in stress-induced cancer cell proliferation in a IER5-dependent manner. Functionally, (Microbial infection) Plays a role in latent human immunodeficiency virus (HIV-1) transcriptional reactivation. Binds to the HIV-1 long terminal repeat promoter (LTR) to reactivate viral transcription by recruiting cellular transcriptional elongation factors, such as CDK9, CCNT1 and EP300. This is Heat shock factor protein 1 from Homo sapiens (Human).